A 1249-amino-acid polypeptide reads, in one-letter code: Protein lingerer (1249 aa).

A disordered region spans residues 1-66 (MSTQTRSGGG…VVKAKQPTAE (66 aa)). 2 stretches are compositionally biased toward gly residues: residues 7-30 (SGGG…GAAG) and 38-50 (GSTG…GAGG). Residues 84 to 124 (KIQEKIQSLMETTQRSEEEVCCALQECDSDLDRAVIFLLET) enclose the UBA domain. Disordered regions lie at residues 132-312 (TTSK…LKPE), 350-375 (SAGA…ASNV), 454-506 (MPPM…PPTT), 549-579 (YAAA…AVEM), 616-717 (TTGT…TSVS), 738-922 (PYGQ…SLPI), 1016-1042 (GRFT…TGSG), 1124-1149 (QQQS…APSM), 1164-1186 (KQSF…AGTT), and 1211-1249 (QNMH…TGPN). Residues 186 to 209 (NRGGSGNQRSGGPGRGGRAGGYRD) show a composition bias toward gly residues. The span at 210-227 (GGGDRDRDRDRNGYDKGG) shows a compositional bias: basic and acidic residues. 2 stretches are compositionally biased toward gly residues: residues 228 to 240 (EGGG…GGDG) and 248 to 269 (DGPG…GGPR). Positions 350–369 (SAGAGAQQQQSQQSTQTGVP) are enriched in low complexity. Over residues 457–494 (MNTSSSLSAEQSQYFSTLSSQNSNLQPTPSAVGFQQQP) the composition is skewed to polar residues. 3 stretches are compositionally biased toward low complexity: residues 549-559 (YAAAATQQPPV), 616-639 (TTGT…PATV), and 647-664 (QSQL…APQQ). The segment covering 678-705 (ASSQIMPGQGTTEALSSQNDGLANSYSR) has biased composition (polar residues). Residues 706-717 (TNASGSVSTSVS) are compositionally biased toward low complexity. Polar residues-rich tracts occupy residues 738-769 (PYGQ…TASY) and 777-809 (GYNN…NVNA). Residues 811–861 (QPPSSSVTNNVVPNNNTGNSVGGVSNQSNLPVNNNAVNSSSNNNAGGYLSS) show a composition bias toward low complexity. Residues 862–873 (QYPVSQTSSAFP) show a composition bias toward polar residues. 3 stretches are compositionally biased toward low complexity: residues 874–884 (SQQNYQNSSQN), 892–922 (NSNT…SLPI), and 1023–1034 (NNSSPVSNVPSS). Residues 1124–1138 (QQQSKGQTVANQQSG) show a composition bias toward polar residues. Residues 1216-1249 (DSNSSGQRPQNNNQGKTASKQQGYSASTYWTGPN) are compositionally biased toward polar residues.

It localises to the cytoplasm. In terms of biological role, acts in the nervous system to mediate the control of copulatory organs during courtship. The protein is Protein lingerer of Anopheles gambiae (African malaria mosquito).